A 207-amino-acid polypeptide reads, in one-letter code: Protein lin-7 homolog B (207 aa).

The short motif at 1-13 (MAALVEPLGLERD) is the Kinase interacting site element. Residues 10–65 (LERDVSRAVELLERLQRSGELPPQKLQALQRVLQSRFCSAIREVYEQLYDTLDITG) form the L27 domain. Positions 93–175 (VVELPKTDEG…SVKLVVRYTP (83 aa)) constitute a PDZ domain. Residues 187–207 (KMRSARRRQQHHSYTSLESRG) are disordered. The span at 198 to 207 (HSYTSLESRG) shows a compositional bias: polar residues.

It belongs to the lin-7 family. As to quaternary structure, forms a complex with CASK and CASKIN1. Component of the brain-specific heterotrimeric complex (LIN-10-LIN-2-LIN-7 complex) composed of at least APBA1, CASK, and LIN7, which associates with the motor protein KIF17 to transport vesicles along microtubules. Forms a heterotrimeric complex composed of MMP5, LIN7B and PATJ; the N-terminal L27 domain of PALS1 interacts with the L27 domain of PATJ and the C-terminal L27 domain of PALS1 interacts with the L27 domain of LIN7B. Forms a heterotrimeric complex with DLG1 and CASK via their L27 domains. Interacts with DLG4 and GRIN2B as well as CDH1 and CTNNB1, the channels KCNJ12/Kir2.2, KCNJ4/Kir2.3 and probably KCNJ2/Kir2.1 and SLC6A12/BGT-1 via its PDZ domain. The association of LIN7A with cadherin and beta-catenin is calcium-dependent, occurs at synaptic junctions and requires the actin cytoskeleton. Interacts with EGFR, ERBB2, ERBB3 and ERBB4 with both PDZ and KID domains. Associates with KIF17 via APBA1. Interacts with ASIC3. Interacts with TOPK. Interacts with RTKN. Interacts with APBA1. Interacts with MPP7. Interacts with DLG2. Interacts with DLG3. Expressed in the kidney; predominantly in the vasa recta.

The protein localises to the cell membrane. It localises to the basolateral cell membrane. Its subcellular location is the cell junction. It is found in the postsynaptic density membrane. The protein resides in the tight junction. Its function is as follows. Plays a role in establishing and maintaining the asymmetric distribution of channels and receptors at the plasma membrane of polarized cells. Forms membrane-associated multiprotein complexes that may regulate delivery and recycling of proteins to the correct membrane domains. The tripartite complex composed of LIN7 (LIN7A, LIN7B or LIN7C), CASK and APBA1 associates with the motor protein KIF17 to transport vesicles containing N-methyl-D-aspartate (NMDA) receptor subunit NR2B along microtubules. This complex may have the potential to couple synaptic vesicle exocytosis to cell adhesion in brain. Ensures the proper localization of GRIN2B (subunit 2B of the NMDA receptor) to neuronal postsynaptic density and may function in localizing synaptic vesicles at synapses where it is recruited by beta-catenin and cadherin. Required to localize Kir2 channels, GABA transporter (SLC6A12) and EGFR/ERBB1, ERBB2, ERBB3 and ERBB4 to the basolateral membrane of epithelial cells. May increase the amplitude of ASIC3 acid-evoked currents by stabilizing the channel at the cell surface. This is Protein lin-7 homolog B (Lin7b) from Mus musculus (Mouse).